We begin with the raw amino-acid sequence, 269 residues long: Aquaporin-1 (269 aa).

The Cytoplasmic portion of the chain corresponds to 2–11; that stretch reads ASEFKKKLFW. The chain crosses the membrane as a helical span at residues 12–29; sequence RAVVAEFLATTLFVFISI. At 30-46 the chain is on the extracellular side; the sequence is GSALGFKYPVGNNQTAV. Residue N42 is glycosylated (N-linked (GlcNAc...) asparagine). Residues 47-65 form a helical membrane-spanning segment; it reads QDNVKVSLAFGLSIATLAQ. Topologically, residues 66 to 68 are cytoplasmic; that stretch reads SVG. An intramembrane segment occupies 69-82; the sequence is HISGAHLNPAVTLG. The NPA 1 motif lies at 76–78; sequence NPA. Residues 83 to 90 are Cytoplasmic-facing; that stretch reads LLLSCQIS. A helical membrane pass occupies residues 91 to 109; the sequence is IFRALMYIIAQCVGAIVAT. The Extracellular portion of the chain corresponds to 110–133; that stretch reads AILSGITSSLTGNSLGRNDLADGV. Residues 134–153 form a helical membrane-spanning segment; that stretch reads NSGQGLGIEIIGTLQLVLCV. The Cytoplasmic segment spans residues 154-163; that stretch reads LATTDRRRRD. A helical membrane pass occupies residues 164–181; it reads LGGSAPLAIGLSVALGHL. Topologically, residues 182 to 186 are extracellular; sequence LAIDY. An intramembrane segment occupies 187–199; sequence TGCGINPARSFGS. The short motif at 192-194 is the NPA 2 element; sequence NPA. The Extracellular segment spans residues 200-206; it reads AVITHNF. N-linked (GlcNAc...) asparagine glycosylation occurs at N205. The chain crosses the membrane as a helical span at residues 207 to 224; that stretch reads SNHWIFWVGPFIGGALAV. The Cytoplasmic portion of the chain corresponds to 225-269; it reads LIYDFILAPRSSDLTDRVKVWTSGQVEEYDLDADDINSRVEMKPK. At S247 the chain carries Phosphoserine. Y253 carries the post-translational modification Phosphotyrosine. S262 carries the post-translational modification Phosphoserine.

This sequence belongs to the MIP/aquaporin (TC 1.A.8) family. Homotetramer; each monomer provides an independent water pore. Component of the ankyrin-1 complex in the erythrocyte, composed of ANK1, RHCE, RHAG, SLC4A1, EPB42, GYPA, GYPB and AQP1. Interacts with EPHB2; involved in endolymph production in the inner ear. Identified in a complex with STOM. Interacts (via the N-terminal) with ANK1 (via ANK 1-5 repeats). Interacts (via the C-terminal) with EPB42. In terms of tissue distribution, detected in erythrocytes (at protein level). Expressed in a number of tissues including erythrocytes, renal tubules, retinal pigment epithelium, heart, lung, skeletal muscle, kidney and pancreas. Weakly expressed in brain, placenta and liver.

Its subcellular location is the cell membrane. The catalysed reaction is H2O(in) = H2O(out). The enzyme catalyses nitric oxide(out) = nitric oxide(in). It carries out the reaction CO2(out) = CO2(in). It catalyses the reaction glycerol(in) = glycerol(out). The catalysed reaction is H2O2(out) = H2O2(in). The enzyme catalyses K(+)(in) = K(+)(out). It carries out the reaction Na(+)(in) = Na(+)(out). The water channel activity is inhibited by P-choloromercuribenzene sulphonate and diethylpyrocarbonate(DPPC). The glycerol channel activity is inhibited by P-choloromercuribenzene sulphonate, diethylpyrocarbonate(DPPC), phloretin and Cu(2+). Inhibited by mercury. Its function is as follows. Forms a water channel that facilitates the transport of water across cell membranes, playing a crucial role in water homeostasis in various tissues. Could also be permeable to small solutes including hydrogen peroxide, glycerol and gases such as amonnia (NH3), nitric oxide (NO) and carbon dioxide (CO2). Recruited to the ankyrin-1 complex, a multiprotein complex of the erythrocyte membrane, it could be part of a CO2 metabolon, linking facilitated diffusion of CO2 across the membrane, anion exchange of Cl(-)/HCO3(-) and interconversion of dissolved CO2 and carbonic acid in the cytosol. In vitro, it shows non-selective gated cation channel activity and may be permeable to cations like K(+) and Na(+) in vivo. In Homo sapiens (Human), this protein is Aquaporin-1.